Here is a 255-residue protein sequence, read N- to C-terminus: MWLLLPLSFLLTSTAQDGGKLLEGEECAPHSQPWQVALYERGRFNCGASLISPHWVLSAAHCQSRFMRVRLGEHNLRKRDGPEQLRTASRVIPHPRYEARSHRHDIMLLRLVQPARLTPQVRPVVLPTRCPHPGEACVVSGWGLVSHNEPGTTGRPQSQVSLPDTLHCANISIISDASCDKNYPGRLTNTMVCAGAEGRGAESCEGDSGGPLVCGGILQGIVSWGDVPCDNTTKPGVYTKVCRYVKWIRETMKRN.

An N-terminal signal peptide occupies residues 1–15; sequence MWLLLPLSFLLTSTA. Positions 16 to 20 are cleaved as a propeptide — activation peptide; it reads QDGGK. A serine protease region spans residues 21–253; the sequence is LLEGEECAPH…YVKWIRETMK (233 aa). Cysteine 46 and cysteine 62 are oxidised to a cystine. Catalysis depends on charge relay system residues histidine 61 and aspartate 105. Cystine bridges form between cysteine 137-cysteine 214, cysteine 179-cysteine 193, and cysteine 204-cysteine 229. A glycan (N-linked (GlcNAc...) asparagine) is linked at asparagine 170. The active-site Charge relay system is the serine 208. Residue asparagine 231 is glycosylated (N-linked (GlcNAc...) asparagine).

The protein belongs to the peptidase S1 family. Kallikrein subfamily.

It is found in the secreted. Its function is as follows. Protease whose physiological substrate is not yet known. The protein is Kallikrein-15 (KLK15) of Saguinus oedipus (Cotton-top tamarin).